We begin with the raw amino-acid sequence, 152 residues long: Superoxide dismutase [Cu-Zn] (152 aa).

His-45, His-47, and His-62 together coordinate Cu cation. A disulfide bridge connects residues Cys-56 and Cys-145. Residues His-62, His-70, His-79, and Asp-82 each coordinate Zn(2+). Cu cation is bound at residue His-119.

The protein belongs to the Cu-Zn superoxide dismutase family. As to quaternary structure, homodimer. It depends on Cu cation as a cofactor. Zn(2+) serves as cofactor.

Its subcellular location is the cytoplasm. The enzyme catalyses 2 superoxide + 2 H(+) = H2O2 + O2. Its function is as follows. Destroys radicals which are normally produced within the cells and which are toxic to biological systems. In Paulownia kawakamii (Dragon tree), this protein is Superoxide dismutase [Cu-Zn] (SODCC).